A 117-amino-acid polypeptide reads, in one-letter code: Large ribosomal subunit protein uL18 (117 aa).

Belongs to the universal ribosomal protein uL18 family. Part of the 50S ribosomal subunit; part of the 5S rRNA/L5/L18/L25 subcomplex. Contacts the 5S and 23S rRNAs.

Its function is as follows. This is one of the proteins that bind and probably mediate the attachment of the 5S RNA into the large ribosomal subunit, where it forms part of the central protuberance. The chain is Large ribosomal subunit protein uL18 from Thiobacillus denitrificans (strain ATCC 25259 / T1).